Here is a 224-residue protein sequence, read N- to C-terminus: Mammalian ependymin-related protein 1 (224 aa).

Residues 1 to 37 (MPGRAPLHTVPGALGPWLLGCLWAWTLCGLCSLGAVG) form the signal peptide. Cystine bridges form between cysteine 42–cysteine 172, cysteine 88–cysteine 222, and cysteine 113–cysteine 210. Asparagine 130 and asparagine 182 each carry an N-linked (GlcNAc...) asparagine glycan.

This sequence belongs to the ependymin family. In terms of assembly, homodimer. N-glycosylated; the glycan contains mannose-6-phosphate moieties.

Its subcellular location is the lysosome lumen. It is found in the secreted. Functionally, binds anionic lipids and gangliosides at acidic pH. The sequence is that of Mammalian ependymin-related protein 1 (EPDR1) from Macaca fascicularis (Crab-eating macaque).